Here is a 515-residue protein sequence, read N- to C-terminus: Bifunctional purine biosynthesis protein PurH (515 aa).

The MGS-like domain maps to 1–145 (MTKRVLISVS…KNHASVTVVV (145 aa)).

It belongs to the PurH family.

It carries out the reaction (6R)-10-formyltetrahydrofolate + 5-amino-1-(5-phospho-beta-D-ribosyl)imidazole-4-carboxamide = 5-formamido-1-(5-phospho-D-ribosyl)imidazole-4-carboxamide + (6S)-5,6,7,8-tetrahydrofolate. The enzyme catalyses IMP + H2O = 5-formamido-1-(5-phospho-D-ribosyl)imidazole-4-carboxamide. It participates in purine metabolism; IMP biosynthesis via de novo pathway; 5-formamido-1-(5-phospho-D-ribosyl)imidazole-4-carboxamide from 5-amino-1-(5-phospho-D-ribosyl)imidazole-4-carboxamide (10-formyl THF route): step 1/1. The protein operates within purine metabolism; IMP biosynthesis via de novo pathway; IMP from 5-formamido-1-(5-phospho-D-ribosyl)imidazole-4-carboxamide: step 1/1. This chain is Bifunctional purine biosynthesis protein PurH, found in Streptococcus pneumoniae serotype 19F (strain G54).